A 151-amino-acid chain; its full sequence is UPF0208 membrane protein SG1605 (151 aa).

2 consecutive transmembrane segments (helical) span residues 46–64 (FGVRFMPAVAVFTLTWQIA) and 70–90 (GPAVATAIFACSLPMQGLWWL).

The protein belongs to the UPF0208 family.

Its subcellular location is the cell inner membrane. This Sodalis glossinidius (strain morsitans) protein is UPF0208 membrane protein SG1605.